The chain runs to 329 residues: (+)-eremophilene synthase (329 aa).

Asp91 and Glu96 together coordinate Mg(2+). Positions 91 to 95 (DDAYD) match the DDXXD motif motif. Arg185 serves as a coordination point for substrate. Residues Asn231 and Ser235 each contribute to the Mg(2+) site. Lys238 is a substrate binding site. Glu239 provides a ligand contact to Mg(2+). 317-318 (RY) contacts substrate.

This sequence belongs to the terpene synthase family. Mg(2+) is required as a cofactor.

The catalysed reaction is (2E,6E)-farnesyl diphosphate = (+)-eremophilene + diphosphate. It functions in the pathway secondary metabolite biosynthesis; terpenoid biosynthesis. Functionally, catalyzes the conversion of (2E,6E)-farnesyl diphosphate (FPP) to yield the bicyclic sesquiterpene eremophilene via a 1,10-cyclization, which requires the abstraction of the pyrophosphate from FPP to yield the (E,E)-germacradienyl cation. The only accepted substrate is farnesyl diphosphate (FPP). The protein is (+)-eremophilene synthase of Sorangium cellulosum (strain So ce56) (Polyangium cellulosum (strain So ce56)).